Consider the following 240-residue polypeptide: Biosynthetic peptidoglycan transglycosylase (240 aa).

Residues 12–31 form a helical membrane-spanning segment; that stretch reads ALMWFMVGSVLLVLLLRFVP.

The protein belongs to the glycosyltransferase 51 family.

It is found in the cell inner membrane. The catalysed reaction is [GlcNAc-(1-&gt;4)-Mur2Ac(oyl-L-Ala-gamma-D-Glu-L-Lys-D-Ala-D-Ala)](n)-di-trans,octa-cis-undecaprenyl diphosphate + beta-D-GlcNAc-(1-&gt;4)-Mur2Ac(oyl-L-Ala-gamma-D-Glu-L-Lys-D-Ala-D-Ala)-di-trans,octa-cis-undecaprenyl diphosphate = [GlcNAc-(1-&gt;4)-Mur2Ac(oyl-L-Ala-gamma-D-Glu-L-Lys-D-Ala-D-Ala)](n+1)-di-trans,octa-cis-undecaprenyl diphosphate + di-trans,octa-cis-undecaprenyl diphosphate + H(+). The protein operates within cell wall biogenesis; peptidoglycan biosynthesis. Peptidoglycan polymerase that catalyzes glycan chain elongation from lipid-linked precursors. The chain is Biosynthetic peptidoglycan transglycosylase from Pseudomonas fluorescens (strain ATCC BAA-477 / NRRL B-23932 / Pf-5).